The following is a 217-amino-acid chain: 8-oxoguanine DNA glycosylase/AP lyase (217 aa).

Active-site residues include lysine 138 and aspartate 157.

The protein belongs to the type-2 OGG1 family.

It catalyses the reaction 2'-deoxyribonucleotide-(2'-deoxyribose 5'-phosphate)-2'-deoxyribonucleotide-DNA = a 3'-end 2'-deoxyribonucleotide-(2,3-dehydro-2,3-deoxyribose 5'-phosphate)-DNA + a 5'-end 5'-phospho-2'-deoxyribonucleoside-DNA + H(+). Functionally, catalyzes the excision of an oxidatively damaged form of guanine (7,8-dihydro-8-oxoguanine = 8-oxoG) from DNA. Also cleaves the DNA backbone at apurinic/apyrimidinic sites (AP sites). In Fusobacterium nucleatum subsp. nucleatum (strain ATCC 25586 / DSM 15643 / BCRC 10681 / CIP 101130 / JCM 8532 / KCTC 2640 / LMG 13131 / VPI 4355), this protein is 8-oxoguanine DNA glycosylase/AP lyase.